An 887-amino-acid chain; its full sequence is Oxysterol-binding protein-related protein 3 (887 aa).

The tract at residues 1–35 (MMSDEKNLGVSQKLVSPSRSTSSCSSKQGSRQDSW) is disordered. Phosphoserine occurs at positions 16 and 34. Low complexity predominate over residues 16–32 (SPSRSTSSCSSKQGSRQ). The PH domain occupies 51-146 (PPVQKGFLLK…WVSKLRHHRM (96 aa)). The FFAT 1 signature appears at 161-167 (HFFSGST). Residues Ser200, Ser251, and Ser265 each carry the phosphoserine modification. Residues 261 to 326 (GSFESPKKEK…KNYSDGSETS (66 aa)) are disordered. Residues 268 to 280 (KEKRSHRRWRSRA) show a composition bias toward basic residues. Phosphoserine is present on residues Ser304, Ser309, Ser320, Ser323, Ser371, Ser372, Ser410, Ser425, Ser437, and Ser440. Residues 450–454 (EFFDA) carry the FFAT 2 motif.

This sequence belongs to the OSBP family. As to quaternary structure, homodimer. Interacts with RRAS. Interacts (phosphorylated form) with VAPA. Interacts with OSBPL6. In terms of processing, phosphorylation is enhanced in vitro by phorbol-12-myristate-13-acetate (PMA), forskolin and calcium ionophore A23187. Phosphorylation seems to be stimulated in conditions of low cell-cell (or cell-matrix) adhesion. Expressed in a subset of small lymphocytes (at protein level). Expressed at high concentration in kidney, lymph node and thymus. Expressed at moderate concentration in stomach, jejunum, ileum, appendix, spleen, leukocytes, trachea, lung and thyroid gland. Expressed at low concentration in whole brain, esophagus, duodenum, ileocecum, colon, skeletal muscle, bone marrow, placenta and mammary gland. Isoform 1a, isoform 1b, isoform 1c and isoform 1d are highly expressed in brain, bone marrow, colon, kidney, lung, skeletal muscle, spleen, thymus and thyroid. Not expressed in heart and liver. Isoform 2a, isoform 2b, isoform 2c and isoform 2d are expressed in brain, bone marrow, kidney, skeletal muscle, spleen, thymus and thyroid. Not expressed in heart, liver and lung.

Its subcellular location is the endoplasmic reticulum membrane. It is found in the cytoplasm. The protein resides in the cytosol. It localises to the cell membrane. The protein localises to the cell projection. Its subcellular location is the filopodium tip. It is found in the nucleus membrane. Its function is as follows. Phosphoinositide-binding protein which associates with both cell and endoplasmic reticulum (ER) membranes. Can bind to the ER membrane protein VAPA and recruit VAPA to plasma membrane sites, thus linking these intracellular compartments. The ORP3-VAPA complex stimulates RRAS signaling which in turn attenuates integrin beta-1 (ITGB1) activation at the cell surface. With VAPA, may regulate ER morphology. Has a role in regulation of the actin cytoskeleton, cell polarity and cell adhesion. Binds to phosphoinositides with preference for PI(3,4)P2 and PI(3,4,5)P3. Also binds 25-hydroxycholesterol and cholesterol. The chain is Oxysterol-binding protein-related protein 3 (OSBPL3) from Homo sapiens (Human).